We begin with the raw amino-acid sequence, 344 residues long: Phosphate acyltransferase (344 aa).

Belongs to the PlsX family. Homodimer. Probably interacts with PlsY.

Its subcellular location is the cytoplasm. The catalysed reaction is a fatty acyl-[ACP] + phosphate = an acyl phosphate + holo-[ACP]. The protein operates within lipid metabolism; phospholipid metabolism. In terms of biological role, catalyzes the reversible formation of acyl-phosphate (acyl-PO(4)) from acyl-[acyl-carrier-protein] (acyl-ACP). This enzyme utilizes acyl-ACP as fatty acyl donor, but not acyl-CoA. This Cronobacter sakazakii (strain ATCC BAA-894) (Enterobacter sakazakii) protein is Phosphate acyltransferase.